A 361-amino-acid chain; its full sequence is tRNA/tmRNA (uracil-C(5))-methyltransferase (361 aa).

The S-adenosyl-L-methionine site is built by glutamine 185, tyrosine 213, asparagine 218, glutamate 234, and aspartate 294. Cysteine 319 functions as the Nucleophile in the catalytic mechanism. Glutamate 353 acts as the Proton acceptor in catalysis.

It belongs to the class I-like SAM-binding methyltransferase superfamily. RNA M5U methyltransferase family. TrmA subfamily.

The catalysed reaction is uridine(54) in tRNA + S-adenosyl-L-methionine = 5-methyluridine(54) in tRNA + S-adenosyl-L-homocysteine + H(+). It carries out the reaction uridine(341) in tmRNA + S-adenosyl-L-methionine = 5-methyluridine(341) in tmRNA + S-adenosyl-L-homocysteine + H(+). Dual-specificity methyltransferase that catalyzes the formation of 5-methyluridine at position 54 (m5U54) in all tRNAs, and that of position 341 (m5U341) in tmRNA (transfer-mRNA). The protein is tRNA/tmRNA (uracil-C(5))-methyltransferase of Pseudomonas putida (strain ATCC 47054 / DSM 6125 / CFBP 8728 / NCIMB 11950 / KT2440).